The primary structure comprises 677 residues: Fidgetin-like protein 1 (677 aa).

Positions 203–216 (TSSAPSGESTTATF) are enriched in polar residues. Disordered regions lie at residues 203–232 (TSSAPSGESTTATFHRTPLFGNTKKEPQSF), 249–324 (VPSG…SFNG), and 337–378 (GIFG…TDDR). Residue Lys226 forms a Glycyl lysine isopeptide (Lys-Gly) (interchain with G-Cter in SUMO2) linkage. The segment covering 264 to 280 (DSDTINMLSNPTLNKAP) has biased composition (polar residues). A compositionally biased stretch (basic and acidic residues) spans 281 to 292 (SKTEDSGQREDN). Residue Lys341 is modified to N6-acetyllysine. The segment covering 347-358 (SNKQDGSEQNGN) has biased composition (polar residues). Residues Ala407 and 447-452 (GTGKTL) contribute to the ATP site.

It belongs to the AAA ATPase family. As to quaternary structure, hexamer. Interacts (via N-terminal one-half region) with RAD51; the interaction is direct. Interacts (via N-terminal one-half region) with SPIDR (via the C-terminal region); the interaction is direct. Interacts with FIRRM; may regulate homologous recombination. It depends on Mg(2+) as a cofactor.

It localises to the nucleus. Its subcellular location is the cytoplasm. The protein localises to the perinuclear region. It catalyses the reaction ATP + H2O = ADP + phosphate + H(+). Functionally, involved in DNA double-strand break (DBS) repair via homologous recombination (HR). Recruited at DSB sites independently of BRCA2, RAD51 and RAD51 paralogs in a H2AX-dependent manner. May regulate osteoblast proliferation and differentiation. May play a role in the control of male meiosis dynamic. The chain is Fidgetin-like protein 1 (Fignl1) from Rattus norvegicus (Rat).